Reading from the N-terminus, the 1356-residue chain is Fibronectin type III domain containing protein 3C1 (1356 aa).

Disordered stretches follow at residues 303–341 (PRNM…SDNN), 356–402 (TYDE…SDVA), and 428–452 (NQKK…QPGC). Over residues 308 to 341 (DNIPDTNTTDTITSSSAHTPSISTSNATFCSDNN) the composition is skewed to low complexity. Residues 370–393 (PSCTSQSASNPSVSENAHNPSSIN) are compositionally biased toward polar residues. The segment covering 439 to 448 (LKEHNTEDRT) has biased composition (basic and acidic residues). 4 consecutive Fibronectin type-III domains span residues 454-549 (NIEK…TPGC), 553-648 (PPLA…TPPA), 650-741 (LPPK…TRPA), and 745-842 (CPNK…TLPP). Positions 825–838 (GQSRPSDVLTIQTP) are enriched in polar residues. The tract at residues 825–894 (GQSRPSDVLT…QDRKVHPSSE (70 aa)) is disordered. Positions 883–894 (PHQDRKVHPSSE) are enriched in basic and acidic residues. Fibronectin type-III domains are found at residues 914–1007 (PPSQ…TPGT), 1017–1103 (EVES…TKPL), 1104–1199 (PPEP…TKSP), and 1202–1299 (ALKA…TYKH). Residues 1299–1320 (HHSGHGKGSGSKGKGNHNDKGE) are disordered. Residues 1330-1350 (TFVLTLLIGFALIAVLCAVAV) traverse the membrane as a helical segment. The Cytoplasmic segment spans residues 1351–1356 (QYLLIN).

This sequence belongs to the FNDC3 family.

It localises to the membrane. The chain is Fibronectin type III domain containing protein 3C1 (Fndc3c1) from Mus musculus (Mouse).